A 283-amino-acid chain; its full sequence is MELWYTDQHTKDVRFSIKMKEQLVSVESEFQRIDIIETYEYGRVLVLDGEMMITEKDEFIYHEMITHVPMAVHPNIRNVLVIGAGDGGTIRELTKYDTIEHIDMVEVDKEIVQVCREYMPFTACKLNDKRVSMHFEEGLRFVRGKQDEYDLIIVDCADPFGPAEGLFTREFYGNCYKALHDDGILINQHESPFYNEHSGSVQKAHRHITAVFPLSTVYQCHIPSYPSGHWLFGFASKKYDPIKDLNDKKWNELKLPVRYYNTDLHKGCFYLPNYVKELLGSYE.

Residues 2–237 form the PABS domain; the sequence is ELWYTDQHTK…GHWLFGFASK (236 aa). Gln-31 is an S-methyl-5'-thioadenosine binding site. Residues His-62 and Asp-86 each contribute to the spermidine site. Residues Glu-106 and 137-138 contribute to the S-methyl-5'-thioadenosine site; that span reads EG. Asp-155 (proton acceptor) is an active-site residue. 155 to 158 is a binding site for spermidine; sequence DCAD. Residue Pro-162 participates in S-methyl-5'-thioadenosine binding.

The protein belongs to the spermidine/spermine synthase family. In terms of assembly, homodimer or homotetramer.

It is found in the cytoplasm. The enzyme catalyses S-adenosyl 3-(methylsulfanyl)propylamine + putrescine = S-methyl-5'-thioadenosine + spermidine + H(+). The protein operates within amine and polyamine biosynthesis; spermidine biosynthesis; spermidine from putrescine: step 1/1. In terms of biological role, catalyzes the irreversible transfer of a propylamine group from the amino donor S-adenosylmethioninamine (decarboxy-AdoMet) to putrescine (1,4-diaminobutane) to yield spermidine. This chain is Polyamine aminopropyltransferase, found in Lachnoclostridium phytofermentans (strain ATCC 700394 / DSM 18823 / ISDg) (Clostridium phytofermentans).